The primary structure comprises 208 residues: Flavin-dependent thymidylate synthase (208 aa).

In terms of domain architecture, ThyX spans 1–208; it reads MEVICKHYTP…QYLFEDCLKH (208 aa). FAD is bound by residues Ser-50 and 74–76; that span reads RHR. DUMP-binding positions include 71–74, 84–86, and Lys-147; these read ELSR and SSR. A ThyX motif motif is present at residues 74–84; the sequence is RHRIASLSVKS. FAD-binding positions include 163-165 and Asn-169; that span reads NAR. Arg-174 provides a ligand contact to dUMP. The active-site Involved in ionization of N3 of dUMP, leading to its activation is Arg-174.

Belongs to the thymidylate synthase ThyX family. As to quaternary structure, homotetramer. It depends on FAD as a cofactor.

It carries out the reaction dUMP + (6R)-5,10-methylene-5,6,7,8-tetrahydrofolate + NADPH + H(+) = dTMP + (6S)-5,6,7,8-tetrahydrofolate + NADP(+). The protein operates within pyrimidine metabolism; dTTP biosynthesis. Functionally, catalyzes the reductive methylation of 2'-deoxyuridine-5'-monophosphate (dUMP) to 2'-deoxythymidine-5'-monophosphate (dTMP) while utilizing 5,10-methylenetetrahydrofolate (mTHF) as the methyl donor, and NADPH and FADH(2) as the reductant. The sequence is that of Flavin-dependent thymidylate synthase from Helicobacter pylori (strain J99 / ATCC 700824) (Campylobacter pylori J99).